We begin with the raw amino-acid sequence, 59 residues long: MDKEVPKGSPREPALNIKKSDKSFKRKKPTENVLIFLINRQLGRHRSDIDLSRWVWMLS.

Residues 1–10 are compositionally biased toward basic and acidic residues; the sequence is MDKEVPKGSP. The disordered stretch occupies residues 1–25; the sequence is MDKEVPKGSPREPALNIKKSDKSFK.

The chain is Embryonic testis differentiation protein homolog A from Homo sapiens (Human).